A 166-amino-acid polypeptide reads, in one-letter code: NAD(P)H-quinone oxidoreductase subunit I, chloroplastic (166 aa).

2 4Fe-4S ferredoxin-type domains span residues 55-84 (GRIH…VDWK) and 95-124 (LNYS…MTEE). [4Fe-4S] cluster contacts are provided by C64, C67, C70, C74, C104, C107, C110, and C114.

The protein belongs to the complex I 23 kDa subunit family. In terms of assembly, NDH is composed of at least 16 different subunits, 5 of which are encoded in the nucleus. [4Fe-4S] cluster is required as a cofactor.

The protein localises to the plastid. The protein resides in the chloroplast thylakoid membrane. The enzyme catalyses a plastoquinone + NADH + (n+1) H(+)(in) = a plastoquinol + NAD(+) + n H(+)(out). It catalyses the reaction a plastoquinone + NADPH + (n+1) H(+)(in) = a plastoquinol + NADP(+) + n H(+)(out). In terms of biological role, NDH shuttles electrons from NAD(P)H:plastoquinone, via FMN and iron-sulfur (Fe-S) centers, to quinones in the photosynthetic chain and possibly in a chloroplast respiratory chain. The immediate electron acceptor for the enzyme in this species is believed to be plastoquinone. Couples the redox reaction to proton translocation, and thus conserves the redox energy in a proton gradient. The protein is NAD(P)H-quinone oxidoreductase subunit I, chloroplastic of Bahiopsis tomentosa (Tecote).